We begin with the raw amino-acid sequence, 224 residues long: ATP-dependent dethiobiotin synthetase BioD (224 aa).

12-17 lines the ATP pocket; sequence GVGKTF. Residue threonine 16 participates in Mg(2+) binding. Residue lysine 37 is part of the active site. Substrate is bound at residue threonine 41. ATP is bound by residues asparagine 52, 107–110, 167–168, 197–199, and glutamate 204; these read EGAG, GS, and PEG. Mg(2+)-binding residues include asparagine 52 and glutamate 107.

This sequence belongs to the dethiobiotin synthetase family. In terms of assembly, homodimer. Mg(2+) is required as a cofactor.

It localises to the cytoplasm. It catalyses the reaction (7R,8S)-7,8-diammoniononanoate + CO2 + ATP = (4R,5S)-dethiobiotin + ADP + phosphate + 3 H(+). The protein operates within cofactor biosynthesis; biotin biosynthesis; biotin from 7,8-diaminononanoate: step 1/2. Functionally, catalyzes a mechanistically unusual reaction, the ATP-dependent insertion of CO2 between the N7 and N8 nitrogen atoms of 7,8-diaminopelargonic acid (DAPA, also called 7,8-diammoniononanoate) to form a ureido ring. In Corynebacterium glutamicum (strain ATCC 13032 / DSM 20300 / JCM 1318 / BCRC 11384 / CCUG 27702 / LMG 3730 / NBRC 12168 / NCIMB 10025 / NRRL B-2784 / 534), this protein is ATP-dependent dethiobiotin synthetase BioD.